The chain runs to 237 residues: Sugar fermentation stimulation protein homolog (237 aa).

Belongs to the SfsA family.

This chain is Sugar fermentation stimulation protein homolog, found in Pseudomonas putida (strain GB-1).